Consider the following 138-residue polypeptide: MKMSAEQISEVLKEGELEKRSDNLLQFWKRKTCVLTTDSLNIYADTQKRTKSKELKLQSIKKVDCVERTGKFVYFTIVTTDNKEIDFRCSGDDNCWNAVITMALIDFQNRKAIQDFKTRQDDESGSPGQHESRMARAP.

The PH domain occupies 11–105 (VLKEGELEKR…WNAVITMALI (95 aa)). The tract at residues 117–138 (KTRQDDESGSPGQHESRMARAP) is disordered.

It belongs to the PHLDA2 family.

The protein localises to the cytoplasm. The protein resides in the membrane. Its function is as follows. Plays a role in regulating placenta growth. May act via its PH domain that competes with other PH domain-containing proteins, thereby preventing their binding to membrane lipids. The protein is Pleckstrin homology-like domain family A member 2 (phlda2) of Salmo salar (Atlantic salmon).